The primary structure comprises 427 residues: Lactadherin (427 aa).

Positions 1–18 (MPCPRLLAALFCSSGLFA) are cleaved as a signal peptide. 2 EGF-like domains span residues 20-59 (SGDF…LLCN) and 62-106 (EHGP…IHCE). Cystine bridges form between Cys-24/Cys-35, Cys-29/Cys-47, and Cys-49/Cys-58. Ser-27 is a glycosylation site (O-linked (Fuc...) serine; in PAS-6). O-linked (Fuc...) threonine; in PAS-7 glycosylation is present at Thr-34. An N-linked (GlcNAc...) (hybrid) asparagine; in PAS-6 and PAS-7 glycan is attached at Asn-59. 6 cysteine pairs are disulfide-bonded: Cys-66-Cys-77, Cys-71-Cys-94, Cys-96-Cys-105, Cys-109-Cys-265, Cys-252-Cys-256, and Cys-270-Cys-427. The Cell attachment site motif lies at 85 to 87 (RGD). F5/8 type C domains are found at residues 109-265 (CTSP…LLGC) and 270-427 (CTEP…LLGC). Asn-227 is a glycosylation site (N-linked (GlcNAc...) (high mannose) asparagine; in PAS-6).

Post-translationally, the two O-linked glycans consist of Gal, GlcNAc and Fuc, with probably Fuc as reducing terminal sugar. As to expression, milk and spermatozoan. Also present in epididymis, kidney, heart, lymphatic gland and spleen but not esophagus, small intestine, muscle and liver.

It localises to the membrane. The protein resides in the secreted. It is found in the cytoplasmic vesicle. Its subcellular location is the secretory vesicle. The protein localises to the acrosome membrane. Its function is as follows. Contributes to phagocytic removal of apoptotic cells in many tissues. Plays an important role in the maintenance of intestinal epithelial homeostasis and the promotion of mucosal healing. Promotes VEGF-dependent neovascularization. Specific ligand for the alpha-v/beta-3 and alpha-v/beta-5 receptors. Also binds to phosphatidylserine-enriched cell surfaces in a receptor-independent manner. Zona pellucida-binding protein which may play a role in gamete interaction. The polypeptide is Lactadherin (MFGE8) (Bos taurus (Bovine)).